The chain runs to 314 residues: Vacuolar membrane protein FOSTERSO_4058 (314 aa).

Positions 32-59 (KPTSSVVSETSSKSLPSLTSSAFSTSSG) are disordered. Residues 93 to 113 (VYIAVGAVIGAIFISILIWWL) traverse the membrane as a helical segment. Phosphoserine occurs at positions 148, 254, and 274. The segment at 240 to 309 (EERKLNLNRP…PSMFLDDVLN (70 aa)) is disordered. Basic and acidic residues predominate over residues 254–269 (SPERKEKKINSMEGYH).

It belongs to the PRM5 family.

Its subcellular location is the vacuole membrane. The chain is Vacuolar membrane protein FOSTERSO_4058 from Saccharomyces cerevisiae (strain FostersO) (Baker's yeast).